Reading from the N-terminus, the 258-residue chain is Small ribosomal subunit protein eS1 (258 aa).

Residues 235–258 (VASSGDAGSAVRRDGYEPPVQESV) are disordered.

Belongs to the eukaryotic ribosomal protein eS1 family. In terms of assembly, component of the small ribosomal subunit. Mature ribosomes consist of a small (40S) and a large (60S) subunit. The 40S subunit contains about 33 different proteins and 1 molecule of RNA (18S). The 60S subunit contains about 49 different proteins and 3 molecules of RNA (28S, 5.8S and 5S).

The protein localises to the cytoplasm. The sequence is that of Small ribosomal subunit protein eS1 from Trichoplax adhaerens (Trichoplax reptans).